The chain runs to 171 residues: ATP synthase subunit b (171 aa).

The helical transmembrane segment at 2–22 (FLVKMVLGFLIFLSPLCATGL) threads the bilayer.

Belongs to the ATPase B chain family. In terms of assembly, F-type ATPases have 2 components, F(1) - the catalytic core - and F(0) - the membrane proton channel. F(1) has five subunits: alpha(3), beta(3), gamma(1), delta(1), epsilon(1). F(0) has three main subunits: a(1), b(2) and c(10-14). The alpha and beta chains form an alternating ring which encloses part of the gamma chain. F(1) is attached to F(0) by a central stalk formed by the gamma and epsilon chains, while a peripheral stalk is formed by the delta and b chains.

Its subcellular location is the cell inner membrane. F(1)F(0) ATP synthase produces ATP from ADP in the presence of a proton or sodium gradient. F-type ATPases consist of two structural domains, F(1) containing the extramembraneous catalytic core and F(0) containing the membrane proton channel, linked together by a central stalk and a peripheral stalk. During catalysis, ATP synthesis in the catalytic domain of F(1) is coupled via a rotary mechanism of the central stalk subunits to proton translocation. Functionally, component of the F(0) channel, it forms part of the peripheral stalk, linking F(1) to F(0). The polypeptide is ATP synthase subunit b (Helicobacter pylori (strain Shi470)).